Here is a 238-residue protein sequence, read N- to C-terminus: DNA N-6-adenine-methyltransferase (238 aa).

The protein belongs to the N(4)/N(6)-methyltransferase family.

The enzyme catalyses a 2'-deoxyadenosine in DNA + S-adenosyl-L-methionine = an N(6)-methyl-2'-deoxyadenosine in DNA + S-adenosyl-L-homocysteine + H(+). In terms of biological role, methyltransferase that methylates adenine residues in the dsDNA sequence 5'-GATC-3'. May prevent degradation of viral DNA by the host restriction-modification antiviral defense system. This is DNA N-6-adenine-methyltransferase from Escherichia phage T1 (Bacteriophage T1).